We begin with the raw amino-acid sequence, 707 residues long: NAD(P)H-quinone oxidoreductase subunit 5, chloroplastic (707 aa).

The next 15 membrane-spanning stretches (helical) occupy residues 9–29 (WIIP…LLLF), 40–60 (WAFP…DLSI), 89–109 (IDSL…FVLI), 125–145 (FAYM…SNLI), 147–167 (IYIF…FWFT), 184–204 (IGDF…GSFE), 219–239 (NEVH…GAVA), 258–278 (TPIS…FLVA), 280–300 (LLPL…IGII), 327–347 (LGYM…FHLI), 354–374 (ALLF…VGYS), 396–416 (IAFL…CFWS), 425–445 (WLYS…TAFY), 538–558 (LFPM…AIPL), and 592–612 (FLTN…TAFL).

Belongs to the complex I subunit 5 family. As to quaternary structure, NDH is composed of at least 16 different subunits, 5 of which are encoded in the nucleus.

It is found in the plastid. The protein localises to the chloroplast thylakoid membrane. The catalysed reaction is a plastoquinone + NADH + (n+1) H(+)(in) = a plastoquinol + NAD(+) + n H(+)(out). It catalyses the reaction a plastoquinone + NADPH + (n+1) H(+)(in) = a plastoquinol + NADP(+) + n H(+)(out). NDH shuttles electrons from NAD(P)H:plastoquinone, via FMN and iron-sulfur (Fe-S) centers, to quinones in the photosynthetic chain and possibly in a chloroplast respiratory chain. The immediate electron acceptor for the enzyme in this species is believed to be plastoquinone. Couples the redox reaction to proton translocation, and thus conserves the redox energy in a proton gradient. The polypeptide is NAD(P)H-quinone oxidoreductase subunit 5, chloroplastic (ndhF) (Malvaviscus arboreus (Turk's cap)).